The primary structure comprises 419 residues: Vacuolar aspartic protease (419 aa).

Positions 1 to 22 are cleaved as a signal peptide; that stretch reads MQLSLSALTTVALALTSSLVDA. The Peptidase A1 domain occupies 104–415; the sequence is YFTEIQIGTP…DLDKNAVGLA (312 aa). The active site involves Asp-122. Residues Cys-135 and Cys-140 are joined by a disulfide bond. Asn-157 carries an N-linked (GlcNAc...) asparagine glycan. Residue Asp-307 is part of the active site. A disulfide bridge connects residues Cys-341 and Cys-374. The N-linked (GlcNAc...) asparagine glycan is linked to Asn-358. Residues 417–419 carry the Microbody targeting signal motif; the sequence is TKV.

It belongs to the peptidase A1 family.

Its subcellular location is the vacuole. The sequence is that of Vacuolar aspartic protease (APR1) from Candida albicans (Yeast).